A 484-amino-acid chain; its full sequence is Chromosomal replication initiator protein DnaA (484 aa).

A domain I, interacts with DnaA modulators region spans residues 1–73 (MQEGKNIWSL…EILIEKGHST (73 aa)). The segment at 73–140 (TINVEFIHSQ…EEIHIKYRNP (68 aa)) is domain II. The segment at 141–357 (FLKKKYTFEN…AAVTKLKAHI (217 aa)) is domain III, AAA+ region. Gly185, Gly187, Lys188, and Thr189 together coordinate ATP. Positions 358 to 484 (DLEDIEIDTN…IELMNKINKN (127 aa)) are domain IV, binds dsDNA.

Belongs to the DnaA family. In terms of assembly, oligomerizes as a right-handed, spiral filament on DNA at oriC.

The protein localises to the cytoplasm. In terms of biological role, plays an essential role in the initiation and regulation of chromosomal replication. ATP-DnaA binds to the origin of replication (oriC) to initiate formation of the DNA replication initiation complex once per cell cycle. Binds the DnaA box (a 9 base pair repeat at the origin) and separates the double-stranded (ds)DNA. Forms a right-handed helical filament on oriC DNA; dsDNA binds to the exterior of the filament while single-stranded (ss)DNA is stabiized in the filament's interior. The ATP-DnaA-oriC complex binds and stabilizes one strand of the AT-rich DNA unwinding element (DUE), permitting loading of DNA polymerase. After initiation quickly degrades to an ADP-DnaA complex that is not apt for DNA replication. Binds acidic phospholipids. This chain is Chromosomal replication initiator protein DnaA, found in Borrelia duttonii (strain Ly).